We begin with the raw amino-acid sequence, 369 residues long: Tsukushi (369 aa).

Residues Met-1–Thr-19 form the signal peptide. Residues Lys-20–Leu-60 enclose the LRRNT domain. 11 LRR repeats span residues Asp-61 to Thr-81, Thr-87 to Arg-108, Tyr-111 to Ser-132, Pro-134 to Ser-155, Pro-161 to Ser-181, Asn-184 to Pro-205, Leu-206 to Gly-226, Gly-229 to Ser-248, Ala-254 to Gly-276, Ser-279 to Tyr-300, and Ser-303 to Gln-323. Asn-76 carries N-linked (GlcNAc...) asparagine glycosylation. Asn-189 is a glycosylation site (N-linked (GlcNAc...) asparagine). A glycan (N-linked (GlcNAc...) asparagine) is linked at Asn-284.

As to quaternary structure, forms a ternary complex with chordin/CHRD and BMP4. In terms of assembly, interacts with FZD4 (via FZ domain); competes with WNT2B for binding to FZD4, inhibiting Wnt signaling and repressing peripheral eye development. Interacts with BMP4; shows stronger interaction with BMP4 than isoform 2. Interacts with DVR1/VG1; the interaction is inhibited by BMP4. Interacts with BMP7. Interacts with FZD4 (via FZ domain); competes with WNT2B for binding to FZD4, inhibiting Wnt signaling and repressing peripheral eye development. Interacts with BMP4; shows weaker interaction with BMP4 than isoform 1. Interacts with DVR1/VG1; the interaction is inhibited by BMP4. Interacts with BMP7. N-glycosylated. In terms of tissue distribution, during embryonic development, expressed in the middle primitive streak and Hensen's node. Expressed in the peripheral region of the developing eye. Expressed in the presomitic mesoderm during somitogenesis in a NOTCH-dependent manner.

The protein localises to the secreted. Functionally, contributes to various developmental events through its interactions with multiple signaling pathways. Dorsalizing factor involved in the induction of Hensen's node by inhibiting bone morphogenetic proteins during gastrulation and by enhancing DVR1/VG1 activity. Wnt signaling inhibitor which competes with WNT2B for binding to Wnt receptor FZD4 and represses WNT2B-dependent development of the peripheral eye. In terms of biological role, shows strong bone morphogenetic protein antagonistic activity. Its function is as follows. Shows weak bone morphogenetic protein antagonistic activity. The sequence is that of Tsukushi (TSKU) from Gallus gallus (Chicken).